The sequence spans 1345 residues: Protein dispatched homolog 2 (1345 aa).

Residues 1 to 28 (MAPEASPERSCSLHTCPLEDPTGAPVPP) are disordered. The helical transmembrane segment at 125-145 (VAVIVGCLAFIFLCTLAGLLG) threads the bilayer. N-linked (GlcNAc...) asparagine glycans are attached at residues N304 and N420. The SSD domain maps to 429 to 598 (LGLKPRLLKY…LLWLPATVVL (170 aa)). A run of 6 helical transmembrane segments spans residues 440–460 (LAEDTMYPLIALVVIFFGMSL), 465–485 (LFITFMSLLGVLGSLMVAYFL), 497–517 (FVNLAALLLLSGVCVNYTLIF), 544–564 (FGYLLLVSGLTTSAAFYGSYL), 572–592 (CFALFMGTAVLVHMGLTLLWL), and 659–679 (YIWICWFAALAAGGAYIGGVS). Residue N776 is glycosylated (N-linked (GlcNAc...) asparagine). The next 5 membrane-spanning stretches (helical) occupy residues 919–939 (PAVVLGLALALAFATLLLSTW), 945–965 (LFSVAAVAGTVLLTVGLLVLL), 974–994 (ALFLSASVGLSVDLTINYCIS), 1019–1039 (AMTTGVLFASGVIMLPSTILL), and 1043–1063 (LGIIVMMVKFLGCGFASFFFQ). Disordered regions lie at residues 1251–1271 (VRVPDSVGTSPEVMNGTGHPI) and 1295–1345 (PNMP…GYSS). Polar residues predominate over residues 1297–1306 (MPNSHHSSLS). R1310 is modified (omega-N-methylarginine).

This sequence belongs to the dispatched family.

It localises to the membrane. In Mus musculus (Mouse), this protein is Protein dispatched homolog 2 (Disp2).